A 118-amino-acid polypeptide reads, in one-letter code: Immunoglobulin heavy variable 4-31 (118 aa).

Positions 1–19 are cleaved as a signal peptide; that stretch reads MKHLWFFLLLVAAPRWVLS. The segment at 20–44 is framework-1; it reads QVQLQESGPGLVKPSQTLSLTCTVS. Positions 20-118 constitute an Ig-like domain; sequence QVQLQESGPG…ADTAVYYCAR (99 aa). A disulfide bridge connects residues Cys-41 and Cys-116. The segment at 45 to 54 is complementarity-determining-1; sequence GGSISSGGYY. Residues 55–71 are framework-2; sequence WSWIRQHPGKGLEWIGY. Positions 72 to 78 are complementarity-determining-2; the sequence is IYYSGST. Residues 79–116 form a framework-3 region; that stretch reads YYNPSLKSLVTISVDTSKNQFSLKLSSVTAADTAVYYC. The segment at 117–118 is complementarity-determining-3; that stretch reads AR.

As to quaternary structure, immunoglobulins are composed of two identical heavy chains and two identical light chains; disulfide-linked.

It is found in the secreted. Its subcellular location is the cell membrane. Functionally, v region of the variable domain of immunoglobulin heavy chains that participates in the antigen recognition. Immunoglobulins, also known as antibodies, are membrane-bound or secreted glycoproteins produced by B lymphocytes. In the recognition phase of humoral immunity, the membrane-bound immunoglobulins serve as receptors which, upon binding of a specific antigen, trigger the clonal expansion and differentiation of B lymphocytes into immunoglobulins-secreting plasma cells. Secreted immunoglobulins mediate the effector phase of humoral immunity, which results in the elimination of bound antigens. The antigen binding site is formed by the variable domain of one heavy chain, together with that of its associated light chain. Thus, each immunoglobulin has two antigen binding sites with remarkable affinity for a particular antigen. The variable domains are assembled by a process called V-(D)-J rearrangement and can then be subjected to somatic hypermutations which, after exposure to antigen and selection, allow affinity maturation for a particular antigen. The sequence is that of Immunoglobulin heavy variable 4-31 from Homo sapiens (Human).